We begin with the raw amino-acid sequence, 149 residues long: MSIEILNESGHPLDVKRLAALSRFVMDRMRVHPLAELCIKAVDEPTIAQLNEQWMEKAGPTDVLAFPMDELRPGLVDEDPEEGVLGDLVLCPDVAARQGETAGHGTEAEIELLTVHGILHLLGYDHAEPEEHREMFGLQDELLAAWRAR.

Residues H116, H120, and H126 each contribute to the Zn(2+) site.

The protein belongs to the endoribonuclease YbeY family. Requires Zn(2+) as cofactor.

It localises to the cytoplasm. Its function is as follows. Single strand-specific metallo-endoribonuclease involved in late-stage 70S ribosome quality control and in maturation of the 3' terminus of the 16S rRNA. This chain is Endoribonuclease YbeY, found in Nocardioides sp. (strain ATCC BAA-499 / JS614).